The primary structure comprises 224 residues: Urease accessory protein UreF (224 aa).

This sequence belongs to the UreF family. UreD, UreF and UreG form a complex that acts as a GTP-hydrolysis-dependent molecular chaperone, activating the urease apoprotein by helping to assemble the nickel containing metallocenter of UreC. The UreE protein probably delivers the nickel.

The protein localises to the cytoplasm. In terms of biological role, required for maturation of urease via the functional incorporation of the urease nickel metallocenter. This Pseudomonas entomophila (strain L48) protein is Urease accessory protein UreF.